The primary structure comprises 311 residues: GTP cyclohydrolase MptA (311 aa).

It belongs to the GTP cyclohydrolase IV family. Homodimer. The cofactor is Fe(2+).

It carries out the reaction GTP + H2O = 7,8-dihydroneopterin 2',3'-cyclic phosphate + formate + diphosphate + H(+). The protein operates within cofactor biosynthesis; 5,6,7,8-tetrahydromethanopterin biosynthesis. In terms of biological role, converts GTP to 7,8-dihydro-D-neopterin 2',3'-cyclic phosphate, the first intermediate in the biosynthesis of coenzyme methanopterin. The protein is GTP cyclohydrolase MptA of Methanocorpusculum labreanum (strain ATCC 43576 / DSM 4855 / Z).